Reading from the N-terminus, the 201-residue chain is Cytochrome c oxidase assembly protein CtaG (201 aa).

The Cytoplasmic segment spans residues 1–13 (MTDQGENEKKQRR). Residues 14-36 (SNATIAVACLSFFVCMIGAAYAS) traverse the membrane as a helical; Signal-anchor for type II membrane protein segment. Topologically, residues 37-201 (VPLYRIFCQV…KAVGSTRNGG (165 aa)) are periplasmic.

It belongs to the COX11/CtaG family.

Its subcellular location is the cell inner membrane. Functionally, exerts its effect at some terminal stage of cytochrome c oxidase synthesis, probably by being involved in the insertion of the copper B into subunit I. In Brucella ovis (strain ATCC 25840 / 63/290 / NCTC 10512), this protein is Cytochrome c oxidase assembly protein CtaG.